We begin with the raw amino-acid sequence, 872 residues long: Facilitated trehalose transporter Tret1 (872 aa).

Disordered stretches follow at residues 1–40, 53–217, 262–281, and 293–315; these read MSGR…LKEK, VESN…KATS, SSSE…RKHQ, and KVLQ…KRLI. Residues 1–406 are Cytoplasmic-facing; that stretch reads MSGRDNRGAG…VYRPTTNPIY (406 aa). Positions 8-22 are enriched in gly residues; it reads GAGGGGGGGGGGSGG. Composition is skewed to low complexity over residues 55-68, 84-98, and 121-132; these read SNLS…SLDT, RHPQ…QQQR, and PPTQQQPQQQHQ. Phosphoserine is present on residues serine 262, serine 263, and serine 264. Phosphoserine occurs at positions 334 and 336. Residues 340–361 are disordered; the sequence is FLTSRQHFQQQRSISTDSRKSR. The span at 344 to 355 shows a compositional bias: polar residues; sequence RQHFQQQRSIST. The chain crosses the membrane as a helical span at residues 407–427; the sequence is IWTQVLAALSVSLGSLVVGFV. Topologically, residues 428 to 454 are extracellular; the sequence is SAYTSPALITMTNGNITSFEVTPQAAS. Asparagine 442 is a glycosylation site (N-linked (GlcNAc...) asparagine). Residues 455–475 form a helical membrane-spanning segment; it reads WVGGIMPLAGLLGGIAGGPFI. Topologically, residues 476 to 488 are cytoplasmic; it reads EYLGRRNTILTTA. A helical transmembrane segment spans residues 489–509; that stretch reads VPFIVSSLLIACAVNITMVLL. Over 510–511 the chain is Extracellular; that stretch reads GR. Residues 512–532 traverse the membrane as a helical segment; that stretch reads FLAGFCVGIASLSLPVYLGET. Over 533–538 the chain is Cytoplasmic; sequence VQPEVR. The helical transmembrane segment at 539 to 559 threads the bilayer; the sequence is GTLGLLPTAFGNIGILLCFVA. The Extracellular segment spans residues 560–566; that stretch reads GTYMDWS. The chain crosses the membrane as a helical span at residues 567 to 587; that stretch reads MLAFLGAALPVPFLILMFLIP. The Cytoplasmic segment spans residues 588–650; the sequence is ETPRWYVSRG…ELLKRNNLKP (63 aa). Residues 651-671 traverse the membrane as a helical segment; the sequence is LSISLGLMFFQQLSGINAVIF. Topologically, residues 672 to 687 are extracellular; it reads YTVQIFKDAGSTIDGN. The chain crosses the membrane as a helical span at residues 688 to 708; it reads VCTIIVGIVNFMATFIGIILI. Residues 709-714 are Cytoplasmic-facing; it reads DRAGRK. A helical transmembrane segment spans residues 715–735; it reads ILLYVSNVAMIITLFVLGGFF. Residues 736–755 lie on the Extracellular side of the membrane; the sequence is YCKDKAGIDVSNVGWLPLSC. Residues 756 to 776 traverse the membrane as a helical segment; it reads FVVYILGFSLGFGPIPWLMMG. Residues 777–784 are Cytoplasmic-facing; that stretch reads EILPAKIR. Residues 785–803 form a helical membrane-spanning segment; sequence GSAASVATAFNWTCTFVVT. Topologically, residues 804-816 are extracellular; that stretch reads KTFQDMLDVIGSY. Residues 817–837 form a helical membrane-spanning segment; sequence GAFWLFGAICFIGLFFVIIYV. Over 838–872 the chain is Cytoplasmic; it reads PETQGKTLEDIERKMMGRVRRMSSVANIKPLSFNM. Residues serine 860 and serine 861 each carry the phosphoserine modification.

It belongs to the major facilitator superfamily. Sugar transporter (TC 2.A.1.1) family. Trehalose transporter subfamily.

Its subcellular location is the cell membrane. In terms of biological role, low-capacity facilitative transporter for trehalose. Does not transport maltose, sucrose or lactose. Mediates the bidirectional transfer of trehalose. Responsible for the transport of trehalose synthesized in the fat body and the incorporation of trehalose into other tissues that require a carbon source, thereby regulating trehalose levels in the hemolymph. This is Facilitated trehalose transporter Tret1 from Drosophila willistoni (Fruit fly).